A 73-amino-acid chain; its full sequence is uncharacterized protein (73 aa).

This is an uncharacterized protein from Sinorhizobium fredii (strain NBRC 101917 / NGR234).